The following is a 91-amino-acid chain: Probable Fe(2+)-trafficking protein (91 aa).

The protein belongs to the Fe(2+)-trafficking protein family.

In terms of biological role, could be a mediator in iron transactions between iron acquisition and iron-requiring processes, such as synthesis and/or repair of Fe-S clusters in biosynthetic enzymes. This is Probable Fe(2+)-trafficking protein from Ralstonia pickettii (strain 12J).